The primary structure comprises 457 residues: Elongation factor 1-alpha (457 aa).

Glycine 2 is subject to N,N,N-trimethylglycine. Residue lysine 3 is modified to N6,N6-dimethyllysine; alternate. Lysine 3 bears the N6-methyllysine; alternate mark. One can recognise a tr-type G domain in the interval 5 to 240 (KTHVNVVVIG…DAIEPPVRPS (236 aa)). Residues 14-21 (GHVDSGKS) form a G1 region. 14-21 (GHVDSGKS) contributes to the GTP binding site. Lysine 30 is subject to N6-methyllysine. A G2 region spans residues 70–74 (GITID). Position 79 is an N6,N6,N6-trimethyllysine (lysine 79). Residues 91 to 94 (DAPG) form a G3 region. Residues 91 to 95 (DAPGH) and 153 to 156 (NKMD) each bind GTP. The segment at 153–156 (NKMD) is G4. The G5 stretch occupies residues 192–194 (SGW). Lysine 316 bears the N6,N6-dimethyllysine; alternate mark. Lysine 316 is subject to N6-methyllysine; alternate. Residue lysine 389 is modified to N6-methyllysine.

It belongs to the TRAFAC class translation factor GTPase superfamily. Classic translation factor GTPase family. EF-Tu/EF-1A subfamily.

The protein localises to the cytoplasm. Its function is as follows. This protein promotes the GTP-dependent binding of aminoacyl-tRNA to the A-site of ribosomes during protein biosynthesis. The sequence is that of Elongation factor 1-alpha (TEF-3) from Mucor circinelloides f. lusitanicus (Mucor racemosus var. lusitanicus).